The sequence spans 270 residues: MSLKKSPFFELRSGSVDTLLFIVKTADLDALRAELVKRFEATPEFFADDVVAIDVRRLADHERVPLDDIRGMLNDVRMRVIGVVAQPEQHAWAASAGLPLLEARDRRAPSSKAADEAPVQQAEPAAPAAGQAALFEQAGPTLADAGAPPESPAPAVAAQSATLVVDRPLHSGQQIYAKGDLVVLGPVSYGAEVIAEGNIHIYAPLRGRALAGVHGNHDARIFCTCLEPELISIAGIYRTTENPLPADVLGKSVQIRLEQEKLMIEPLRLT.

Positions 105–129 (DRRAPSSKAADEAPVQQAEPAAPAA) are disordered. Residues 116 to 129 (EAPVQQAEPAAPAA) show a composition bias toward low complexity.

Belongs to the MinC family. In terms of assembly, interacts with MinD and FtsZ.

In terms of biological role, cell division inhibitor that blocks the formation of polar Z ring septums. Rapidly oscillates between the poles of the cell to destabilize FtsZ filaments that have formed before they mature into polar Z rings. Prevents FtsZ polymerization. This is Probable septum site-determining protein MinC from Burkholderia mallei (strain NCTC 10247).